The primary structure comprises 933 residues: Phosphoenolpyruvate carboxylase (933 aa).

Residues H164 and K595 contribute to the active site.

It belongs to the PEPCase type 1 family. Requires Mg(2+) as cofactor.

It catalyses the reaction oxaloacetate + phosphate = phosphoenolpyruvate + hydrogencarbonate. Forms oxaloacetate, a four-carbon dicarboxylic acid source for the tricarboxylic acid cycle. The protein is Phosphoenolpyruvate carboxylase of Rhodopseudomonas palustris (strain BisB5).